Consider the following 190-residue polypeptide: Large ribosomal subunit protein bL25 (190 aa).

The protein belongs to the bacterial ribosomal protein bL25 family. CTC subfamily. Part of the 50S ribosomal subunit; part of the 5S rRNA/L5/L18/L25 subcomplex. Contacts the 5S rRNA. Binds to the 5S rRNA independently of L5 and L18.

This is one of the proteins that binds to the 5S RNA in the ribosome where it forms part of the central protuberance. The protein is Large ribosomal subunit protein bL25 of Neisseria meningitidis serogroup C (strain 053442).